Consider the following 328-residue polypeptide: BURP domain-containing protein 11 (328 aa).

In terms of domain architecture, BURP spans phenylalanine 74–arginine 318.

As to expression, expressed in roots.

The sequence is that of BURP domain-containing protein 11 (BURP11) from Oryza sativa subsp. japonica (Rice).